The chain runs to 173 residues: Gamma-crystallin S-2 (173 aa).

2 Beta/gamma crystallin 'Greek key' domains span residues 2 to 40 (GKII…RVES) and 41 to 83 (DWWV…RVPT). The tract at residues 84-88 (HTQRP) is connecting peptide. Beta/gamma crystallin 'Greek key' domains lie at 89-129 (YRMR…HVMG) and 130-172 (AYWI…RRIM).

Belongs to the beta/gamma-crystallin family.

Its function is as follows. Crystallins are the dominant structural components of the vertebrate eye lens. The protein is Gamma-crystallin S-2 (GS-2) of Chiloscyllium indicum (Slender bamboo shark).